Consider the following 86-residue polypeptide: Large ribosomal subunit protein uL23 (86 aa).

It belongs to the universal ribosomal protein uL23 family. Part of the 50S ribosomal subunit. Contacts protein L29.

Functionally, binds to 23S rRNA. One of the proteins that surrounds the polypeptide exit tunnel on the outside of the ribosome. The protein is Large ribosomal subunit protein uL23 of Pyrococcus horikoshii (strain ATCC 700860 / DSM 12428 / JCM 9974 / NBRC 100139 / OT-3).